The chain runs to 692 residues: Furin-like protease kpc-1 (692 aa).

An N-terminal signal peptide occupies residues 1-33; that stretch reads MSNISWYRHCSVRLQLVTLALFLLLGSASLGSA. An N-linked (GlcNAc...) asparagine glycan is attached at Asn-3. Residues 34 to 139 constitute a propeptide that is removed on maturation; the sequence is HIDEEFEDDV…QQVAKRRVKR (106 aa). Residues 140 to 670 lie on the Lumenal side of the membrane; it reads GYRRIRRHTD…RSVQMEATSS (531 aa). The segment at 152-177 is disordered; that stretch reads DIFEEDDDGTQISKSRNRKHPDPNDP. A Ca(2+)-binding site is contributed by Asp-176. The 322-residue stretch at 182 to 503 folds into the Peptidase S8 domain; it reads MWYLNRGEHH…YGLMDAGAMV (322 aa). Asp-221 acts as the Charge relay system in catalysis. Asp-222 is a binding site for substrate. Residues Asp-230, Asp-242, Asp-247, and Asp-249 each contribute to the Ca(2+) site. The tract at residues 230–249 is disordered; sequence DISPNYDERASYDVNDRDND. 259-260 serves as a coordination point for substrate; that stretch reads EN. Residue His-262 is the Charge relay system of the active site. Ile-273 is a Ca(2+) binding site. Asn-275 carries N-linked (GlcNAc...) asparagine glycosylation. Residues Asn-276, Leu-278, and Ile-280 each coordinate Ca(2+). Intrachain disulfides connect Cys-279–Cys-428 and Cys-371–Cys-401. Substrate is bound by residues Glu-304, 321–326, Asp-332, and 360–363; these read SWGPDD and ASGN. Asp-326 serves as a coordination point for Ca(2+). Asp-369 lines the Ca(2+) pocket. Residues Asp-374 and Tyr-376 each coordinate substrate. Glu-399 is a binding site for Ca(2+). The active-site Charge relay system is the Ser-436. Ser-436 lines the substrate pocket. Residues Asn-455 and Asn-487 are each glycosylated (N-linked (GlcNAc...) asparagine). Positions 512–646 constitute a P/Homo B domain; that stretch reads VDEQHRCRQF…ELVLYGTDRE (135 aa). A disulfide bond links Cys-518 and Cys-544. The Cell attachment site signature appears at 570–572; that stretch reads RGD. Residues 671–692 traverse the membrane as a helical segment; it reads GTQYSIFHVITLVILTFSQILY.

It belongs to the peptidase S8 family. Furin subfamily. In terms of assembly, interacts (via extracellular domain) with receptor dma-1 (via extracellular domain); the interaction promotes dma-1 internalization. Ca(2+) is required as a cofactor. Expressed in the nervous system including the ventral nerve cord, the nerve ring and the retrovesicular ganglion, and in epithelial cells. Expressed in IL2 neurons. Expressed in PVD mechanosensory neurons. Expressed in pharynx with strong expression in the g2 pharyngeal gland cells and vpi pharyngeal intestinal valve cells. Expressed in intestine.

The protein resides in the cell membrane. Its subcellular location is the perikaryon. It is found in the cell projection. The protein localises to the axon. Functionally, furin-like protease which cleaves proproteins at the RX(K/R)R consensus motif. During neuronal development, regulates the formation and extension of dendrite branches and cellular positioning of various type of neurons. Together with chin-1 and cdc-42, plays a role in the development of the neuropil and is required for the guidance of axons from neurons, including SubL pioneer neurons and AIY interneurons, into the nerve ring. Its role in axon guidance in glia and pioneer neurons may be through ensuring the fmi-1 protein is correctly localized to the nerve ring. Promotes the formation, extension and self-avoidance of dendritic branches of PVD and FLP mechanosensory neurons. In PVD neurons, regulates plasma membrane levels of branching receptor dma-1 by targeting it to late endosomes and thus promotes normal dendrite branching and dendrite self-avoidance. Also controls dendrite extension in AIY and D-type motoneurons, dendrite branching in AQR sensory neurons and VC4/5 motoneurons, the normal number of dendritic branches in AVL neurons and the positioning of HSN and ALM/PLM neurons. Dispensable for maintaining dendrite branching in adults. Also regulates dauer-specific dendritic branching of IL2 neurons and dauer-specific nictation behavior. Under adverse environmental conditions, may promote dauer formation by processing insulin-like proteins ins-1 and ins-18, two daf-2/InsR antagonists. This chain is Furin-like protease kpc-1, found in Caenorhabditis elegans.